Consider the following 460-residue polypeptide: uncharacterized protein (460 aa).

In terms of domain architecture, TRAM spans 6–64 (PVKKNNDYEIYIDDFGNMGEGIGKIDNFTVFVKDAVKGEKVRAKIIKVNKSFAIGKLID). Positions 77, 83, 86, and 166 each coordinate [4Fe-4S] cluster. S-adenosyl-L-methionine-binding residues include Q290, Y319, E340, and D388. C415 (nucleophile) is an active-site residue.

The protein belongs to the class I-like SAM-binding methyltransferase superfamily. RNA M5U methyltransferase family.

This is an uncharacterized protein from Clostridium acetobutylicum (strain ATCC 824 / DSM 792 / JCM 1419 / IAM 19013 / LMG 5710 / NBRC 13948 / NRRL B-527 / VKM B-1787 / 2291 / W).